The sequence spans 119 residues: Beta-2-microglobulin (119 aa).

Positions 1–20 (MARSVAVVFLMLLSVVCLDA) are cleaved as a signal peptide. Residues 25-114 (PQVQVYTRHP…TTLKEPKVVT (90 aa)) form the Ig-like C1-type domain. Cysteine 45 and cysteine 100 are oxidised to a cystine.

Belongs to the beta-2-microglobulin family. As to quaternary structure, heterodimer of an alpha chain and a beta chain. Beta-2-microglobulin is the beta-chain of major histocompatibility complex class I molecules.

It is found in the secreted. Functionally, component of the class I major histocompatibility complex (MHC). Involved in the presentation of peptide antigens to the immune system. The chain is Beta-2-microglobulin (B2M) from Cricetulus griseus (Chinese hamster).